The primary structure comprises 451 residues: UDP-glucosyltransferase 74AE2 (451 aa).

Catalysis depends on His-17, which acts as the Proton acceptor. His-17 serves as a coordination point for an anthocyanidin. Residue Asp-108 is the Charge relay of the active site. Residues Thr-130, Gln-330, His-345, Trp-348, Asn-349, Ser-350, Glu-353, Asp-369, and Gln-370 each coordinate UDP-alpha-D-glucose.

The protein belongs to the UDP-glycosyltransferase family. In terms of tissue distribution, expressed at higher levels in roots than in leaves.

It catalyses the reaction (20S)-ginsenoside C-K + UDP-alpha-D-glucose = (20S)-ginsenoside F2 + UDP + H(+). It carries out the reaction (20S)-protopanaxadiol + UDP-alpha-D-glucose = (20S)-ginsenoside Rh2 + UDP + H(+). The protein operates within secondary metabolite biosynthesis; terpenoid biosynthesis. In terms of biological role, component of the dammarane-type triterpene saponins (e.g. PPD-type ginsenosides or panaxosides) biosynthetic pathway. Glycosyltransferase that catalyzes the biosynthesis of ginsenoside Rh2 from protopanaxadiol (PPD) and the conversion of compound K to ginsenoside F2. This chain is UDP-glucosyltransferase 74AE2, found in Panax ginseng (Korean ginseng).